Reading from the N-terminus, the 97-residue chain is Signal recognition particle 19 kDa protein (97 aa).

Belongs to the SRP19 family. In terms of assembly, part of the signal recognition particle protein translocation system, which is composed of SRP and FtsY. Archaeal SRP consists of a 7S RNA molecule of 300 nucleotides and two protein subunits: SRP54 and SRP19.

Its subcellular location is the cytoplasm. Its function is as follows. Involved in targeting and insertion of nascent membrane proteins into the cytoplasmic membrane. Binds directly to 7S RNA and mediates binding of the 54 kDa subunit of the SRP. This is Signal recognition particle 19 kDa protein from Pyrobaculum calidifontis (strain DSM 21063 / JCM 11548 / VA1).